The primary structure comprises 191 residues: Adenylate kinase (191 aa).

12–17 contributes to the ATP binding site; it reads GSGKTT. The NMP stretch occupies residues 34–63; that stretch reads STGDLLRAESAKKTERGLLIEKFTSQGELV. AMP contacts are provided by residues T35, R40, 61 to 63, 88 to 91, and Q95; these read ELV and GYPR. The tract at residues 130–136 is LID; sequence GRSRGAD. An ATP-binding site is contributed by R131. AMP is bound by residues R133 and R145. R173 serves as a coordination point for ATP.

It belongs to the adenylate kinase family. In terms of assembly, monomer.

It localises to the cytoplasm. It catalyses the reaction AMP + ATP = 2 ADP. Its pathway is purine metabolism; AMP biosynthesis via salvage pathway; AMP from ADP: step 1/1. In terms of biological role, catalyzes the reversible transfer of the terminal phosphate group between ATP and AMP. Plays an important role in cellular energy homeostasis and in adenine nucleotide metabolism. This chain is Adenylate kinase, found in Helicobacter pylori (strain G27).